The following is a 1874-amino-acid chain: Protein TIC 214 (1874 aa).

6 consecutive transmembrane segments (helical) span residues 18-38 (IINS…FSIG), 64-84 (FITG…HLAL), 87-107 (PHTI…WNNH), 124-144 (LSIQ…YFIL), 172-192 (VGWL…LVWI), and 221-241 (IFSI…PSPI). Disordered stretches follow at residues 248–310 (ETSK…EIRV) and 1567–1624 (KTEC…NEED). Positions 255–268 (GVESEEEGDVEIET) are enriched in acidic residues. Basic and acidic residues-rich tracts occupy residues 298-310 (DSNK…EIRV) and 1584-1601 (NQKE…RSDA).

It belongs to the TIC214 family. Part of the Tic complex.

The protein resides in the plastid. Its subcellular location is the chloroplast inner membrane. Its function is as follows. Involved in protein precursor import into chloroplasts. May be part of an intermediate translocation complex acting as a protein-conducting channel at the inner envelope. This is Protein TIC 214 from Coffea arabica (Arabian coffee).